Consider the following 98-residue polypeptide: MTPVHFSFSSAFILGLMGLAFHRTHLLSALLCLEGMMLSLFIALALWALQFESTGFSTAPMLLLAFSACEASTGLALLVATARTHGTDRLQNLNLLQC.

A run of 3 helical transmembrane segments spans residues 1 to 21 (MTPVHFSFSSAFILGLMGLAF), 29 to 49 (ALLCLEGMMLSLFIALALWAL), and 59 to 79 (APMLLLAFSACEASTGLALLV).

It belongs to the complex I subunit 4L family.

The protein resides in the mitochondrion membrane. The enzyme catalyses a ubiquinone + NADH + 5 H(+)(in) = a ubiquinol + NAD(+) + 4 H(+)(out). In terms of biological role, core subunit of the mitochondrial membrane respiratory chain NADH dehydrogenase (Complex I) which catalyzes electron transfer from NADH through the respiratory chain, using ubiquinone as an electron acceptor. Part of the enzyme membrane arm which is embedded in the lipid bilayer and involved in proton translocation. The chain is NADH-ubiquinone oxidoreductase chain 4L (MT-ND4L) from Carassius auratus (Goldfish).